The following is a 273-amino-acid chain: Putative phosphoenolpyruvate synthase regulatory protein (273 aa).

153-160 (GVSRSGKT) lines the ADP pocket.

It belongs to the pyruvate, phosphate/water dikinase regulatory protein family. PSRP subfamily.

The catalysed reaction is [pyruvate, water dikinase] + ADP = [pyruvate, water dikinase]-phosphate + AMP + H(+). It catalyses the reaction [pyruvate, water dikinase]-phosphate + phosphate + H(+) = [pyruvate, water dikinase] + diphosphate. Its function is as follows. Bifunctional serine/threonine kinase and phosphorylase involved in the regulation of the phosphoenolpyruvate synthase (PEPS) by catalyzing its phosphorylation/dephosphorylation. In Delftia acidovorans (strain DSM 14801 / SPH-1), this protein is Putative phosphoenolpyruvate synthase regulatory protein.